Here is a 1673-residue protein sequence, read N- to C-terminus: AF4/FMR2 family member lilli (1673 aa).

9 disordered regions span residues 1 to 24 (MAQQQQQQMQQQQQHHTSSINNNN), 54 to 80 (YSQNYNMEEYERRKRREREKIERQQGI), 125 to 302 (SRSA…PPEK), 407 to 534 (QLPP…GAQN), 575 to 604 (VGTGSGSGGTLSSGGSSSNKTPSPTESNKW), 722 to 1086 (RLSD…INTL), 1114 to 1133 (QGKLDAAAQPSAPQAPPAAP), 1141 to 1160 (RMTPTQQQQLGAGLASPART), and 1187 to 1315 (KLTP…MGKE). Over residues 71–80 (REKIERQQGI) the composition is skewed to basic and acidic residues. Composition is skewed to low complexity over residues 146–180 (SLGHSPSSASSAAGPTAASATTSLPGQQQHYQQQQ) and 223–244 (PRTSSSNSNSSSVTNNASSGGV). Phosphothreonine is present on T420. The span at 428-441 (LKTEKNHSLEKQDS) shows a compositional bias: basic and acidic residues. The segment covering 443-454 (LENDLELSESED) has biased composition (acidic residues). Phosphoserine is present on residues S450 and S452. Low complexity predominate over residues 465–486 (GNSSNSSESDSSESGSESSSKN). Basic residues predominate over residues 491–500 (HPNHQQHHHQ). A compositionally biased stretch (low complexity) spans 501-525 (LQQQQQQQQATMQQQQVLQQQHRSQ). Residues 577-586 (TGSGSGGTLS) are compositionally biased toward gly residues. Polar residues predominate over residues 594–604 (KTPSPTESNKW). The span at 724–757 (SDSGTSASGSSSSSSSSSDSAMGGEVVPMPGPGE) shows a compositional bias: low complexity. Over residues 775-788 (QPTQSQKAPPSNSV) the composition is skewed to polar residues. The span at 802-812 (QRQKKPRKKKA) shows a compositional bias: basic residues. Residues S821 and S822 each carry the phosphoserine modification. Residues 851-863 (KKGRGRPRKQQQS) constitute a DNA-binding region (a.T hook). Positions 860–898 (QQQSGGSGNLSSASAGSSSQTKGPTLTAAKKPLAKTPLA) are enriched in low complexity. A phosphoserine mark is found at S871 and S873. The segment covering 909-919 (SQSSSNGNTPT) has biased composition (polar residues). Composition is skewed to low complexity over residues 949–965 (SSSAESSSKSSSSSSSS) and 993–1004 (GSGSSSPSSSGS). Polar residues predominate over residues 1011–1022 (TRSQVGSGQALA). A compositionally biased stretch (low complexity) spans 1034–1060 (SQHSQHLSSSDCSSSSGGCTAVCSSSS). Residues 1065–1082 (EGRREKERERKPKSDKNK) are compositionally biased toward basic and acidic residues. Residues 1190 to 1205 (PAQQNGHLTPKDQATN) show a composition bias toward polar residues. Basic and acidic residues-rich tracts occupy residues 1226–1243 (EHPVKPEPELDAGYEAKF) and 1252–1282 (FQLKQERDRDRERERERERERERDREREQPP). S1362 is subject to Phosphoserine. At T1364 the chain carries Phosphothreonine. Residues 1564 to 1583 (NTPSSISPSNSVGSQGSGSN) are compositionally biased toward low complexity. The tract at residues 1564–1588 (NTPSSISPSNSVGSQGSGSNTPPGR) is disordered.

Belongs to the AF4 family. In terms of assembly, component of the super elongation complex (SEC), at least composed of Ell, Cdk9, cyclin-T (CycT), lilli and ear.

The protein resides in the nucleus. Functionally, has a role in transcriptional regulation. Acts in parallel with the Ras/MAPK and the PI3K/PKB pathways in the control of cell identity and cellular growth. Essential for regulation of the cytoskeleton and cell growth but not for cell proliferation or growth rate. Required specifically for the microtubule-based basal transport of lipid droplets. Plays a partially redundant function downstream of Raf in cell fate specification in the developing eye. Pair-rule protein that regulates embryonic cellularization, gastrulation and segmentation. The chain is AF4/FMR2 family member lilli from Drosophila melanogaster (Fruit fly).